Consider the following 705-residue polypeptide: Cell cycle serine/threonine-protein kinase CDC5/MSD2 (705 aa).

Thr-23 bears the Phosphothreonine mark. Basic and acidic residues predominate over residues 41-53 (QTKRLDPNNDHHH). Residues 41 to 63 (QTKRLDPNNDHHHQPAQKKKREK) are disordered. One can recognise a Protein kinase domain in the interval 82–337 (YHRGHFLGEG…LTEIMDYVWF (256 aa)). ATP is bound by residues 88-96 (LGEGGFARC) and Lys-110. Asp-204 acts as the Proton acceptor in catalysis. Ser-419 is modified (phosphoserine). A POLO box 1 domain is found at 513–595 (IVTKWVDYSN…VDFFAKYMKA (83 aa)). 4 residues coordinate Zn(2+): Glu-553, His-569, His-609, and Asp-612. The POLO box 2 domain maps to 614–700 (FLRRYTRYKP…IKEGLKQKST (87 aa)).

It belongs to the protein kinase superfamily. Ser/Thr protein kinase family. CDC5/Polo subfamily. Interacts with CDC48; the interaction is likely to result in CDC5 degradation. Interacts with CSA1.

Its subcellular location is the cytoplasm. It localises to the cytoskeleton. The protein localises to the microtubule organizing center. The protein resides in the spindle pole body. The catalysed reaction is L-seryl-[protein] + ATP = O-phospho-L-seryl-[protein] + ADP + H(+). It catalyses the reaction L-threonyl-[protein] + ATP = O-phospho-L-threonyl-[protein] + ADP + H(+). Protein kinase required for the cell cycle where it is involved in mitotic exit. A component of the fear (CDC14 early anaphase release) network which promotes CDC14 release from the nucleolus during early anaphase. Phosphorylates SCC1/MCD1 and NET1. The polypeptide is Cell cycle serine/threonine-protein kinase CDC5/MSD2 (CDC5) (Saccharomyces cerevisiae (strain ATCC 204508 / S288c) (Baker's yeast)).